A 176-amino-acid polypeptide reads, in one-letter code: Ribosome maturation factor RimM (176 aa).

The region spanning 93 to 166 (ADEYYHADLI…QVVIEPPNEI (74 aa)) is the PRC barrel domain.

The protein belongs to the RimM family. In terms of assembly, binds ribosomal protein uS19.

Its subcellular location is the cytoplasm. In terms of biological role, an accessory protein needed during the final step in the assembly of 30S ribosomal subunit, possibly for assembly of the head region. Essential for efficient processing of 16S rRNA. May be needed both before and after RbfA during the maturation of 16S rRNA. It has affinity for free ribosomal 30S subunits but not for 70S ribosomes. This Rhodopseudomonas palustris (strain ATCC BAA-98 / CGA009) protein is Ribosome maturation factor RimM.